The sequence spans 439 residues: GTPase Der (439 aa).

EngA-type G domains lie at 3–167 and 176–351; these read PTVA…DKVG and IKVA…GNYT. Residues 9–16, 56–60, 119–122, 182–189, 229–233, and 294–297 contribute to the GTP site; these read GRPNVGKS, DTGGI, NKID, GKPNTGKS, DTAGL, and NKWD. A KH-like domain is found at 352–436; sequence RRITTGQIND…PIVFLIREKG (85 aa).

It belongs to the TRAFAC class TrmE-Era-EngA-EngB-Septin-like GTPase superfamily. EngA (Der) GTPase family. As to quaternary structure, associates with the 50S ribosomal subunit.

In terms of biological role, GTPase that plays an essential role in the late steps of ribosome biogenesis. The polypeptide is GTPase Der (Caldicellulosiruptor saccharolyticus (strain ATCC 43494 / DSM 8903 / Tp8T 6331)).